The chain runs to 500 residues: Glycerol kinase (500 aa).

Residue T13 coordinates ADP. ATP is bound by residues T13, T14, and S15. Sn-glycerol 3-phosphate is bound at residue T13. R17 contacts ADP. 4 residues coordinate sn-glycerol 3-phosphate: R83, E84, Y135, and D244. R83, E84, Y135, D244, and Q245 together coordinate glycerol. Residues T266 and G309 each coordinate ADP. ATP contacts are provided by T266, G309, Q313, and G410. 2 residues coordinate ADP: G410 and N414.

The protein belongs to the FGGY kinase family.

The catalysed reaction is glycerol + ATP = sn-glycerol 3-phosphate + ADP + H(+). It functions in the pathway polyol metabolism; glycerol degradation via glycerol kinase pathway; sn-glycerol 3-phosphate from glycerol: step 1/1. Its activity is regulated as follows. Inhibited by fructose 1,6-bisphosphate (FBP). Functionally, key enzyme in the regulation of glycerol uptake and metabolism. Catalyzes the phosphorylation of glycerol to yield sn-glycerol 3-phosphate. This is Glycerol kinase from Burkholderia multivorans (strain ATCC 17616 / 249).